Consider the following 166-residue polypeptide: MKILFLSANEFEDVELIYPYHRLKEEGHEVYIASFEKGVITGKHGYSVKVDLTFDEVNPDEFDALVLPGGRAPERVRLNEKAVEIARKMFTEGKPVATICHGPQILISAGVLKGRKGTSYIGIRDDMINAGVEWIDREVVVDGNWVSSRHPGDLYAWMREFVKLLK.

The region spanning 1 to 166 is the PfpI endopeptidase domain; the sequence is MKILFLSANE…WMREFVKLLK (166 aa). C100 serves as the catalytic Nucleophile. The active site involves H101.

The protein belongs to the peptidase C56 family. As to quaternary structure, homooligomer. Exists in two functional species: the predominant form is a homohexamer that comprises about 90% of the total activity, and the minor form is trimeric.

It is found in the cytoplasm. It carries out the reaction N(omega)-(1-hydroxy-2-oxopropyl)-L-arginyl-[protein] + H2O = lactate + L-arginyl-[protein] + H(+). The enzyme catalyses N(6)-(1-hydroxy-2-oxopropyl)-L-lysyl-[protein] + H2O = lactate + L-lysyl-[protein] + H(+). The catalysed reaction is S-(1-hydroxy-2-oxopropyl)-L-cysteinyl-[protein] + H2O = lactate + L-cysteinyl-[protein] + H(+). It catalyses the reaction N(omega)-(1-hydroxy-2-oxoethyl)-L-arginyl-[protein] + H2O = L-arginyl-[protein] + glycolate + H(+). It carries out the reaction N(6)-(1-hydroxy-2-oxoethyl)-L-lysyl-[protein] + H2O = glycolate + L-lysyl-[protein] + H(+). The enzyme catalyses S-(1-hydroxy-2-oxoethyl)-L-cysteinyl-[protein] + H2O = glycolate + L-cysteinyl-[protein] + H(+). Its function is as follows. Deglycase that catalyzes the deglycation of the Maillard adducts formed between amino groups of proteins and reactive carbonyl groups of glyoxals. Thus, functions as a protein deglycase that repairs methylglyoxal- and glyoxal-glycated proteins, and releases repaired proteins and lactate or glycolate, respectively. Deglycates cysteine, arginine and lysine residues in proteins, and thus reactivates these proteins by reversing glycation by glyoxals. Thus, was shown to afford full protection against glycation of thioredoxin by glyoxal. Acts on early glycation intermediates (hemithioacetals and aminocarbinols), preventing the formation of advanced glycation endproducts (AGE) that cause irreversible damage. Prevents acrylamide formation in asparagine/glyoxal and asparagine/sugar mixtures, likely by degrading asparagine/glyoxal Maillard adducts formed at high temperatures. Also displays proteolytic activity. Cleaves at the carboxyl side of both basic and hydrophobic residues in the P1 position, indicating trypsin- and chymotrypsin-like specificities. This is Deglycase PfpI from Pyrococcus furiosus (strain ATCC 43587 / DSM 3638 / JCM 8422 / Vc1).